A 208-amino-acid chain; its full sequence is Ribosomal RNA large subunit methyltransferase E (208 aa).

S-adenosyl-L-methionine is bound by residues glycine 63, tryptophan 65, aspartate 83, aspartate 99, and aspartate 124. Residue lysine 164 is the Proton acceptor of the active site.

The protein belongs to the class I-like SAM-binding methyltransferase superfamily. RNA methyltransferase RlmE family.

It is found in the cytoplasm. It carries out the reaction uridine(2552) in 23S rRNA + S-adenosyl-L-methionine = 2'-O-methyluridine(2552) in 23S rRNA + S-adenosyl-L-homocysteine + H(+). Functionally, specifically methylates the uridine in position 2552 of 23S rRNA at the 2'-O position of the ribose in the fully assembled 50S ribosomal subunit. The polypeptide is Ribosomal RNA large subunit methyltransferase E (Blochmanniella pennsylvanica (strain BPEN)).